Reading from the N-terminus, the 362-residue chain is MQSYGNPDVTYGWWVGNSVVTNKSSRFIGSHVAHTGLICFAAGANTLWELARYNPDIPMGHQGMVSIPHLASIGIGFDPTGTVFDGTSIAFIGVFHLICSMVYAGAGLLHSLIFSEDTQNSSGLFADDRPEHRQAARYKLEWDNPDNQTFILGHHLIFFGVACIWFVEWARIHGIYDPAIGAVRQVEYNLNLTNIWNHQFDFLAIDSLEDVMGGHAFLAFVEITGGAFHIATKQTGEYTEFKGKNILSAEAVLSWSLAGIGWMAIIAAFWCATNTTVYPEAWYGETLALKFGISPYWIDTADMTGVVSGHTSRAWLANVHYYLGFFFIQGHLWHAIRALGFDFKKVTDAISNLDGARVTLTD.

The next 6 helical transmembrane spans lie at 27-47 (FIGS…ANTL), 89-109 (IAFI…AGLL), 150-170 (FILG…VEWA), 211-231 (VMGG…FHIA), 251-271 (AVLS…AFWC), and 316-336 (LANV…WHAI).

This sequence belongs to the PsbB/PsbC family. IsiA/Pcb subfamily. As to quaternary structure, the antenna complex consists of divinyl chlorophylls (a and b) and divinyl chlorophyll a/b binding proteins and binds more divinyl chlorophyll b than does the antenna complex from high-light-adapted Prochlorococcus. Requires divinyl chlorophyll a as cofactor. The cofactor is divinyl chlorophyll b.

The protein resides in the cellular thylakoid membrane. In terms of biological role, the antenna complex functions as a light receptor, it captures and delivers excitation energy to photosystems II and I. The Prochlorales pcb genes are not related to higher plant LHCs. This is Divinyl chlorophyll a/b light-harvesting protein PcbF (pcbF) from Prochlorococcus marinus (strain NATL2A).